The following is a 369-amino-acid chain: Ribonuclease D (369 aa).

The 166-residue stretch at 1–166 (MITTNDALAA…PIAHKLMEQV (166 aa)) folds into the 3'-5' exonuclease domain. Positions 206 to 285 (RPRQLACLKL…AQAQALLEDA (80 aa)) constitute an HRDC domain.

It belongs to the RNase D family. A divalent metal cation is required as a cofactor.

The protein localises to the cytoplasm. It catalyses the reaction Exonucleolytic cleavage that removes extra residues from the 3'-terminus of tRNA to produce 5'-mononucleotides.. Its function is as follows. Exonuclease involved in the 3' processing of various precursor tRNAs. Initiates hydrolysis at the 3'-terminus of an RNA molecule and releases 5'-mononucleotides. This chain is Ribonuclease D, found in Cronobacter turicensis (strain DSM 18703 / CCUG 55852 / LMG 23827 / z3032).